We begin with the raw amino-acid sequence, 165 residues long: MENLVGLLRIRVKRGINLVSRDSNTSDPFVVVTMGSQKLKTRGVENSCNPEWDDELTLGINDPNQHVTLEVYDKDTFTSHDPMGDAEIDIKPFFEVQGTDIQELTNGTEIRRVKPSGDNCLAEESRIIFSNGKILQDMILQLRNVESGEVEIQIEWINVTGSSDF.

At methionine 1 the chain carries N-acetylmethionine. One can recognise a C2 domain in the interval 1 to 106 (MENLVGLLRI…QGTDIQELTN (106 aa)). Residues arginine 21, aspartate 22, aspartate 27, aspartate 73, lysine 74, aspartate 75, and aspartate 81 each coordinate Ca(2+).

Belongs to the plant CAR protein family. Binds to PYR/PYL/RCAR abscisic acid intracellular receptors in an ABA-independent manner, both at the plasma membrane and in the nucleus.

Its subcellular location is the cell membrane. The protein resides in the nucleus. In terms of biological role, stimulates the GTPase/ATPase activities of Obg-like ATPases. Mediates the transient calcium-dependent interaction of PYR/PYL/RCAR abscisic acid (ABA) receptors with the plasma membrane and thus regulates ABA sensitivity. In Arabidopsis thaliana (Mouse-ear cress), this protein is Protein C2-DOMAIN ABA-RELATED 8.